Consider the following 185-residue polypeptide: Ribosome-recycling factor (185 aa).

The protein belongs to the RRF family.

The protein localises to the cytoplasm. Its function is as follows. Responsible for the release of ribosomes from messenger RNA at the termination of protein biosynthesis. May increase the efficiency of translation by recycling ribosomes from one round of translation to another. This is Ribosome-recycling factor from Pseudomonas syringae pv. tomato (strain ATCC BAA-871 / DC3000).